An 85-amino-acid chain; its full sequence is Small ribosomal subunit protein bS20 (85 aa).

It belongs to the bacterial ribosomal protein bS20 family.

Binds directly to 16S ribosomal RNA. In Borrelia turicatae (strain 91E135), this protein is Small ribosomal subunit protein bS20.